A 973-amino-acid polypeptide reads, in one-letter code: MSELKTISIRGAREHNLKGIDLDLPRNKLIVMTGLSGSGKSSLAFDTIYAEGQRRYVESLSAYARQFLEMMQKPDVDQIDGLSPAISIEQKTTSRNPRSTVGTVTEIYDYMRLLFARVGVPYSPATGLPIESQTVSQMVDRILAFEEGTRLYILAPIVRGRKGEYKKELAELMKKGFQRVKVDGQFYEIADVPALDKKYKHDIDVVVDRAVVRPDMAARLADSLETCLKLADGLAIAEFADKPLPPEDTAAGGSANKSLNETHERVLFSEKFACPVSGFTIPEIEPRLFSFNNPFGACPSCDGLGSQQKVDENLIVPEPARTLRDGAIAPWAKSSSPYYNQTLEALGKAFGFKLSSKWTDLSKEAQHAILQGTDDKIEFNYQDGARSYKTVKNFEGIVPNLERRWKETDSAWAREEIERYMSAAPCPACAGYRLKPEALAVKINKLHIGEVTQMSIRKARDWFEVLPENLNAKQNEIAVRILKEIRERLRFLNDVGLDYLSLSRNSGTLSGGESQRIRLASQIGSGLTGVLYVLDEPSIGLHQRDNARLLETLKHLRDIGNTVIVVEHDEDAILTADYVVDIGPAAGIHGGQVIAEGTPQDVMANPKSLTGKYLSGELGVAVPAERRKPKKGREIKVFGARGNNLQNVTAAVPLGVFTAVTGVSGGGKSTFLIETLYKSAARRVMGAREIPAEHDRIDGFEFIDKVIDIDQSPIGRTPRSNPATYTGAFTPIRDWFAGLPEAKARGYAPGRFSFNVKGGRCEACQGDGVIKIEMHFLPDVYVTCDVCHGKRYNRETLDVTFKGKSIADVLDMTVEEGVEFFAAVPAVRDKLQSLFDVGLGYIKVGQQANTLSGGEAQRVKLAKELSKRSTGRTLYILDEPTTGLHFHDVNKLLEMLHALVEQGNSVVVIEHNLEVIKTADWIIDIGPEGGTGGGEVVATGTPEDIVKVERSYTGHFLKELLDRRPAGKREAAE.

34–41 (GLSGSGKS) is an ATP binding site. 2 ABC transporter domains span residues 331 to 609 (WAKS…PKSL) and 629 to 958 (PKKG…HFLK). An ATP-binding site is contributed by 662–669 (GVSGGGKS). The segment at 761 to 787 (CEACQGDGVIKIEMHFLPDVYVTCDVC) adopts a C4-type zinc-finger fold.

This sequence belongs to the ABC transporter superfamily. UvrA family. Forms a heterotetramer with UvrB during the search for lesions.

The protein localises to the cytoplasm. The UvrABC repair system catalyzes the recognition and processing of DNA lesions. UvrA is an ATPase and a DNA-binding protein. A damage recognition complex composed of 2 UvrA and 2 UvrB subunits scans DNA for abnormalities. When the presence of a lesion has been verified by UvrB, the UvrA molecules dissociate. In Agrobacterium fabrum (strain C58 / ATCC 33970) (Agrobacterium tumefaciens (strain C58)), this protein is UvrABC system protein A.